Reading from the N-terminus, the 258-residue chain is Phosphate import ATP-binding protein PstB (258 aa).

One can recognise an ABC transporter domain in the interval 13–253; it reads IEVENLNLWY…PKEQSTEDYI (241 aa). 45–52 is a binding site for ATP; that stretch reads GPSGCGKS.

The protein belongs to the ABC transporter superfamily. Phosphate importer (TC 3.A.1.7) family. The complex is composed of two ATP-binding proteins (PstB), two transmembrane proteins (PstC and PstA) and a solute-binding protein (PstS).

It localises to the cell membrane. The enzyme catalyses phosphate(out) + ATP + H2O = ADP + 2 phosphate(in) + H(+). Functionally, part of the ABC transporter complex PstSACB involved in phosphate import. Responsible for energy coupling to the transport system. The protein is Phosphate import ATP-binding protein PstB of Methanosarcina acetivorans (strain ATCC 35395 / DSM 2834 / JCM 12185 / C2A).